The sequence spans 631 residues: Guanylate-binding protein 4 (631 aa).

One can recognise a GB1/RHD3-type G domain in the interval 33–283; sequence SQPVVVVAIV…FASYIFTYAK (251 aa). Residues 43 to 50 and 103 to 107 contribute to the GTP site; these read GWSHTGKS and DTEGL. Residues 492 to 592 adopt a coiled-coil conformation; the sequence is IAEKHTKKEA…GHNIKEMKQN (101 aa).

This sequence belongs to the TRAFAC class dynamin-like GTPase superfamily. GB1/RHD3 GTPase family. GB1 subfamily. As to quaternary structure, heterodimer with other family members, including GBP1, GBP2 and GBP5. Dimerization regulates subcellular location. Interacts with IRF7; preventing interaction between TRAF6 and IRF7, resulting in impaired TRAF6-mediated IRF7 ubiquitination. In terms of tissue distribution, mainly expressed in organs of the immune system, such as spleen and lymph nodes.

The protein resides in the golgi apparatus membrane. It is found in the cytoplasm. It localises to the nucleus. The protein localises to the perinuclear region. It carries out the reaction GTP + H2O = GDP + phosphate + H(+). Interferon (IFN)-inducible GTPase that plays important roles in innate immunity against a diverse range of bacterial, viral and protozoan pathogens. Negatively regulates the antiviral response by inhibiting activation of IRF7 transcription factor. This Mus musculus (Mouse) protein is Guanylate-binding protein 4.